Consider the following 263-residue polypeptide: Imidazole glycerol phosphate synthase subunit HisF (263 aa).

Catalysis depends on residues D11 and D130.

The protein belongs to the HisA/HisF family. In terms of assembly, heterodimer of HisH and HisF.

The protein localises to the cytoplasm. It catalyses the reaction 5-[(5-phospho-1-deoxy-D-ribulos-1-ylimino)methylamino]-1-(5-phospho-beta-D-ribosyl)imidazole-4-carboxamide + L-glutamine = D-erythro-1-(imidazol-4-yl)glycerol 3-phosphate + 5-amino-1-(5-phospho-beta-D-ribosyl)imidazole-4-carboxamide + L-glutamate + H(+). It functions in the pathway amino-acid biosynthesis; L-histidine biosynthesis; L-histidine from 5-phospho-alpha-D-ribose 1-diphosphate: step 5/9. In terms of biological role, IGPS catalyzes the conversion of PRFAR and glutamine to IGP, AICAR and glutamate. The HisF subunit catalyzes the cyclization activity that produces IGP and AICAR from PRFAR using the ammonia provided by the HisH subunit. This chain is Imidazole glycerol phosphate synthase subunit HisF, found in Synechococcus sp. (strain CC9311).